The sequence spans 201 residues: Small ribosomal subunit protein uS4c (201 aa).

A disordered region spans residues 17–44; sequence ALPGLTNKKPRTGSDLRNQSRSGKKSQY. The region spanning 89–149 is the S4 RNA-binding domain; sequence MRLDNILFRL…DEQKSRALIQ (61 aa).

It belongs to the universal ribosomal protein uS4 family. In terms of assembly, part of the 30S ribosomal subunit. Contacts protein S5. The interaction surface between S4 and S5 is involved in control of translational fidelity.

The protein resides in the plastid. The protein localises to the chloroplast. One of the primary rRNA binding proteins, it binds directly to 16S rRNA where it nucleates assembly of the body of the 30S subunit. Functionally, with S5 and S12 plays an important role in translational accuracy. The protein is Small ribosomal subunit protein uS4c (rps4) of Solanum bulbocastanum (Wild potato).